Reading from the N-terminus, the 224-residue chain is Late embryogenesis abundant protein, group 3 (224 aa).

2 disordered regions span residues 1 to 169 (MASN…KDKT) and 193 to 224 (NTLG…TRNH). The segment covering 13–23 (GETKARNEEKT) has biased composition (basic and acidic residues). Repeat copies occupy residues 26–36 (VMGATKDKAGQ), 37–47 (TTEATKQKAGE), 48–58 (TTEATKQKAAE), 59–69 (TTEAAKQKASE), and 70–80 (TAEATKQKAAE). The tract at residues 26-153 (VMGATKDKAG…TEAAKQKASE (128 aa)) is 12 X 11 AA tandem repeats. Composition is skewed to basic and acidic residues over residues 41 to 85 (TKQK…KDKT), 92 to 109 (AKEK…RAAQ), and 120 to 151 (EKTE…KQKA). Residues 81–87 (AKDKTAQ) form a 6; truncated repeat. 5 consecutive repeat copies span residues 88–98 (TAQAAKEKTYE), 99–109 (TAQSAKERAAQ), 121–131 (KTEAAKQKAAE), 132–142 (TTEAARQKAAE), and 143–153 (ATEAAKQKASE). Positions 200 to 224 (DNTITTKDNTTGATTKDTTTTTRNH) are enriched in low complexity.

It belongs to the LEA type 4 family.

The sequence is that of Late embryogenesis abundant protein, group 3 from Triticum aestivum (Wheat).